A 196-amino-acid chain; its full sequence is Pyridoxal 5'-phosphate synthase subunit PdxT (196 aa).

47 to 49 lines the L-glutamine pocket; sequence GES. The active-site Nucleophile is C79. Residues R106 and 134 to 135 each bind L-glutamine; that span reads IR. Active-site charge relay system residues include H170 and E172.

Belongs to the glutaminase PdxT/SNO family. In the presence of PdxS, forms a dodecamer of heterodimers. Only shows activity in the heterodimer.

It catalyses the reaction aldehydo-D-ribose 5-phosphate + D-glyceraldehyde 3-phosphate + L-glutamine = pyridoxal 5'-phosphate + L-glutamate + phosphate + 3 H2O + H(+). The catalysed reaction is L-glutamine + H2O = L-glutamate + NH4(+). The protein operates within cofactor biosynthesis; pyridoxal 5'-phosphate biosynthesis. Catalyzes the hydrolysis of glutamine to glutamate and ammonia as part of the biosynthesis of pyridoxal 5'-phosphate. The resulting ammonia molecule is channeled to the active site of PdxS. In Bacillus licheniformis (strain ATCC 14580 / DSM 13 / JCM 2505 / CCUG 7422 / NBRC 12200 / NCIMB 9375 / NCTC 10341 / NRRL NRS-1264 / Gibson 46), this protein is Pyridoxal 5'-phosphate synthase subunit PdxT.